The primary structure comprises 420 residues: UPF0229 protein LPC_3097 (420 aa).

The tract at residues 83–107 (IAGDRIKRPGGGAGGAGGNASDSGE) is disordered. A compositionally biased stretch (gly residues) spans 91–100 (PGGGAGGAGG).

The protein belongs to the UPF0229 family.

The chain is UPF0229 protein LPC_3097 from Legionella pneumophila (strain Corby).